Here is a 337-residue protein sequence, read N- to C-terminus: Biotin synthase (337 aa).

In terms of domain architecture, Radical SAM core spans 58-283; sequence EDVEVEGIVS…RTVLRYAGGR (226 aa). 3 residues coordinate [4Fe-4S] cluster: cysteine 73, cysteine 77, and cysteine 80. The [2Fe-2S] cluster site is built by cysteine 116, cysteine 149, cysteine 208, and arginine 278.

Belongs to the radical SAM superfamily. Biotin synthase family. Homodimer. The cofactor is [4Fe-4S] cluster. It depends on [2Fe-2S] cluster as a cofactor.

The enzyme catalyses (4R,5S)-dethiobiotin + (sulfur carrier)-SH + 2 reduced [2Fe-2S]-[ferredoxin] + 2 S-adenosyl-L-methionine = (sulfur carrier)-H + biotin + 2 5'-deoxyadenosine + 2 L-methionine + 2 oxidized [2Fe-2S]-[ferredoxin]. Its pathway is cofactor biosynthesis; biotin biosynthesis; biotin from 7,8-diaminononanoate: step 2/2. Functionally, catalyzes the conversion of dethiobiotin (DTB) to biotin by the insertion of a sulfur atom into dethiobiotin via a radical-based mechanism. This Pseudarthrobacter chlorophenolicus (strain ATCC 700700 / DSM 12829 / CIP 107037 / JCM 12360 / KCTC 9906 / NCIMB 13794 / A6) (Arthrobacter chlorophenolicus) protein is Biotin synthase.